The sequence spans 178 residues: Large ribosomal subunit protein uL6 (178 aa).

This sequence belongs to the universal ribosomal protein uL6 family. Part of the 50S ribosomal subunit.

Functionally, this protein binds to the 23S rRNA, and is important in its secondary structure. It is located near the subunit interface in the base of the L7/L12 stalk, and near the tRNA binding site of the peptidyltransferase center. This chain is Large ribosomal subunit protein uL6, found in Arthrobacter sp. (strain FB24).